Here is a 302-residue protein sequence, read N- to C-terminus: MQRRELSGSAVALVTPFKKDLTVDEEALRRLVNFQIENGTDIIIPCGTTGESPTLTNEEQVQVIKIVCDEARGKAQVAAGAGTNSTIHAIELAKAAEAAGASAILSVAPYYNKPSQEGFYQHYKGIANAVSVPIIIYNVPGRTGSNIAVDTIIRLAEDLGNVLAVKEASGNMSQITEMLNRRPEKLAVLSGDDPLILPVMALGGDGIISVAANQVPKTVKDLVEAMFASDLTTAQKIHNQYYNLFTLNFIESNPVPVKYTLAKMGLIEEVYRLPLVPLSSSSKAKLDAELVQLGLVEASATA.

Position 49 (T49) interacts with pyruvate. Y137 acts as the Proton donor/acceptor in catalysis. K166 (schiff-base intermediate with substrate) is an active-site residue. I208 lines the pyruvate pocket.

The protein belongs to the DapA family. In terms of assembly, homotetramer; dimer of dimers.

The protein resides in the cytoplasm. It carries out the reaction L-aspartate 4-semialdehyde + pyruvate = (2S,4S)-4-hydroxy-2,3,4,5-tetrahydrodipicolinate + H2O + H(+). It participates in amino-acid biosynthesis; L-lysine biosynthesis via DAP pathway; (S)-tetrahydrodipicolinate from L-aspartate: step 3/4. In terms of biological role, catalyzes the condensation of (S)-aspartate-beta-semialdehyde [(S)-ASA] and pyruvate to 4-hydroxy-tetrahydrodipicolinate (HTPA). This is 4-hydroxy-tetrahydrodipicolinate synthase from Chloroherpeton thalassium (strain ATCC 35110 / GB-78).